We begin with the raw amino-acid sequence, 292 residues long: Forkhead box protein R1 (292 aa).

2 disordered regions span residues 31-50 (PPKLPLEKKPNPDKDGPDYE) and 65-166 (PGKL…ASSQ). 2 stretches are compositionally biased toward basic and acidic residues: residues 35-47 (PLEKKPNPDKDGP) and 70-79 (VSGRRKREDL). Over residues 80 to 89 (TSTLPSSQPP) the composition is skewed to polar residues. Residues 129 to 140 (LTEEEEAEDQED) are compositionally biased toward acidic residues. Basic residues predominate over residues 149 to 161 (PHKRAPLQSRRLR). A DNA-binding region (fork-head) is located at residues 173–272 (RPPLNYFHLI…EEARALASTR (100 aa)).

Expressed in testis (at protein level).

The protein resides in the nucleus. It is found in the cytoplasm. Its subcellular location is the perinuclear region. Transcription factor which acts as both an activator and a repressor. Activates transcription of a number of genes including the heat shock chaperones HSPA1A and HSPA6 and the antioxidant NADPH-dependent reductase DHRS2 which are involved in protection against oxidative stress. Required for normal brain development. This chain is Forkhead box protein R1 (FOXR1), found in Homo sapiens (Human).